The chain runs to 528 residues: Calcium-dependent protein kinase 4 (528 aa).

Residues 1-36 (MGQEVSSVNNTKNEHHKTNKKSLKGGNERHEMKESS) form a disordered region. G2 carries N-myristoyl glycine lipidation. The segment covering 14 to 23 (EHHKTNKKSL) has biased composition (basic residues). Residues 71-329 (KGIKILGKGS…RDALEHEWIK (259 aa)) form the Protein kinase domain. ATP is bound by residues 76 to 84 (LGKGSFGEV) and K99. D193 acts as the Proton acceptor in catalysis. The short motif at 350–358 (NIRQFQSTQ) is the J domain autoinhibitory motif element. The j domain stretch occupies residues 350–386 (NIRQFQSTQKLAQAALLYMGSKLTTIDETKELTKIFK). The short motif at 359 to 368 (KLAQAALLYM) is the J domain EF-hand interaction motif element. EF-hand domains follow at residues 376–411 (DETK…LLKL), 427–458 (EVDQ…RKLL), 459–494 (LSTE…SDVS), and 496–528 (ECWK…LCNY). 20 residues coordinate Ca(2+): D389, N391, D393, Q395, E400, D436, D438, N440, Y442, E447, D472, D474, S476, K478, E483, D506, N508, D510, E512, and E517.

Belongs to the protein kinase superfamily. Ser/Thr protein kinase family. CDPK subfamily. In terms of assembly, may interact with the pre-replication MCM complex prior male gametogenesis activation. Requires Mg(2+) as cofactor. In terms of processing, myristoylated; myristoylation may target it to different subcellular compartments. During male gametogenesis, myristoylation is required to initiate DNA replication but not for mitotic spindle assembly or axoneme activation. Not palmitoylated. Post-translationally, may be autophosphorylated on Thr-234 in vitro.

It is found in the cytoplasm. It localises to the cell membrane. The enzyme catalyses L-seryl-[protein] + ATP = O-phospho-L-seryl-[protein] + ADP + H(+). The catalysed reaction is L-threonyl-[protein] + ATP = O-phospho-L-threonyl-[protein] + ADP + H(+). Its activity is regulated as follows. Activated by calcium. Upon calcium binding to the EF-hand domains, the C-terminus of the junction domain (J domain) undergoes a conformational change which results in the dissociation of the pseudo-substrate inhibitory motif from the catalytic domain. This, in turn, may facilitate the autophosphorylation of the activation loop at Thr-234, which leads to the kinase activation. Intracellular calcium increase is triggered by xanthurenic acid (XA), a small mosquito molecule that induces the differentiation of specialized transmission stages, the gametocytes, into male and female gametes. Activated by a decrease in temperature (20 degrees Celsius) and an increase in pH (7.6) occurring when the parasite is ingested by in the mosquito. Its function is as follows. Calcium-dependent protein kinase which acts as a sensor and effector of intracellular Ca(2+) levels probably in part downstream of cGMP-activated PKG kinase. Plays a central role in the host erythrocytes and hepatocytes infection cycles, sexual reproduction and mosquito transmission of the parasite. During the liver stage, involved in sporozoite motility and thus in sporozoite invasion of host hepatocytes, probably together with CDPK1 and CDPK5. Involved in merosome egress from host hepatocytes, probably together with CDPK5. During the asexual blood stage, involved in merozoite invasion of host erythrocytes and motility by stabilizing the inner membrane complex, a structure below the plasma membrane which acts as an anchor for the glidosome, an acto-myosin motor. Required for cell cycle progression in the male gametocyte. During male gametogenesis in the mosquito gut, required to initiate the first round of DNA replication, probably by facilitating the assembly of the pre-replicative MCM complex, to assemble the first mitotic spindle and, at the end of gametogenesis, to initiate axoneme motility, cytokinesis and subsequent exflagellation. For each of these steps, may phosphorylate SOC1, SOC2 and SOC3, respectively. Together with CDPK1, regulates ookinete gliding in the mosquito host midgut. The chain is Calcium-dependent protein kinase 4 from Plasmodium falciparum (isolate 3D7).